The chain runs to 274 residues: tRNA pseudouridine synthase A (274 aa).

Aspartate 52 functions as the Nucleophile in the catalytic mechanism. Tyrosine 110 is a substrate binding site.

The protein belongs to the tRNA pseudouridine synthase TruA family. In terms of assembly, homodimer.

It catalyses the reaction uridine(38/39/40) in tRNA = pseudouridine(38/39/40) in tRNA. Functionally, formation of pseudouridine at positions 38, 39 and 40 in the anticodon stem and loop of transfer RNAs. This Ralstonia nicotianae (strain ATCC BAA-1114 / GMI1000) (Ralstonia solanacearum) protein is tRNA pseudouridine synthase A.